A 347-amino-acid polypeptide reads, in one-letter code: Selenide, water dikinase (347 aa).

Residue Cys17 is part of the active site. ATP-binding positions include Lys20 and 48 to 50 (TRD). Asp51 lines the Mg(2+) pocket. ATP is bound by residues Asp68, Asp91, and 139–141 (GHS). Asp91 contributes to the Mg(2+) binding site. Asp227 provides a ligand contact to Mg(2+).

This sequence belongs to the selenophosphate synthase 1 family. Class I subfamily. In terms of assembly, homodimer. Mg(2+) serves as cofactor.

It carries out the reaction hydrogenselenide + ATP + H2O = selenophosphate + AMP + phosphate + 2 H(+). Synthesizes selenophosphate from selenide and ATP. The protein is Selenide, water dikinase of Salmonella typhi.